A 321-amino-acid polypeptide reads, in one-letter code: Lipoyl synthase (321 aa).

7 residues coordinate [4Fe-4S] cluster: Cys68, Cys73, Cys79, Cys94, Cys98, Cys101, and Ser308. The Radical SAM core domain maps to 80 to 297 (FNHGTATFMI…KAEAMAMGFT (218 aa)).

It belongs to the radical SAM superfamily. Lipoyl synthase family. [4Fe-4S] cluster serves as cofactor.

It localises to the cytoplasm. It catalyses the reaction [[Fe-S] cluster scaffold protein carrying a second [4Fe-4S](2+) cluster] + N(6)-octanoyl-L-lysyl-[protein] + 2 oxidized [2Fe-2S]-[ferredoxin] + 2 S-adenosyl-L-methionine + 4 H(+) = [[Fe-S] cluster scaffold protein] + N(6)-[(R)-dihydrolipoyl]-L-lysyl-[protein] + 4 Fe(3+) + 2 hydrogen sulfide + 2 5'-deoxyadenosine + 2 L-methionine + 2 reduced [2Fe-2S]-[ferredoxin]. The protein operates within protein modification; protein lipoylation via endogenous pathway; protein N(6)-(lipoyl)lysine from octanoyl-[acyl-carrier-protein]: step 2/2. In terms of biological role, catalyzes the radical-mediated insertion of two sulfur atoms into the C-6 and C-8 positions of the octanoyl moiety bound to the lipoyl domains of lipoate-dependent enzymes, thereby converting the octanoylated domains into lipoylated derivatives. This chain is Lipoyl synthase, found in Cronobacter sakazakii (strain ATCC BAA-894) (Enterobacter sakazakii).